We begin with the raw amino-acid sequence, 547 residues long: Glutamyl-tRNA(Gln) amidotransferase subunit B, mitochondrial (547 aa).

The protein belongs to the GatB/GatE family. GatB subfamily. In terms of assembly, subunit of the heterotrimeric GatFAB amidotransferase (AdT) complex, composed of A, B and F subunits.

It is found in the mitochondrion. The enzyme catalyses L-glutamyl-tRNA(Gln) + L-glutamine + ATP + H2O = L-glutaminyl-tRNA(Gln) + L-glutamate + ADP + phosphate + H(+). Its function is as follows. Allows the formation of correctly charged Gln-tRNA(Gln) through the transamidation of misacylated Glu-tRNA(Gln) in the mitochondria. The reaction takes place in the presence of glutamine and ATP through an activated gamma-phospho-Glu-tRNA(Gln). The polypeptide is Glutamyl-tRNA(Gln) amidotransferase subunit B, mitochondrial (Lachancea thermotolerans (strain ATCC 56472 / CBS 6340 / NRRL Y-8284) (Yeast)).